The chain runs to 256 residues: DNA repair protein RecO (256 aa).

Belongs to the RecO family.

Functionally, involved in DNA repair and RecF pathway recombination. In Streptococcus equi subsp. zooepidemicus (strain MGCS10565), this protein is DNA repair protein RecO.